The sequence spans 328 residues: Beta-agarase C (328 aa).

An N-terminal signal peptide occupies residues 1–17 (MNLTKMAVFAASLFCLA). The propeptide occupies 18-67 (CKNDIDTELEKKSIPESEIQKSEEKLPNEEELTPTDPDEETNKEETVTAN). The segment covering 26-45 (LEKKSIPESEIQKSEEKLPN) has biased composition (basic and acidic residues). Positions 26-61 (LEKKSIPESEIQKSEEKLPNEEELTPTDPDEETNKE) are disordered. Residues 46–59 (EEELTPTDPDEETN) are compositionally biased toward acidic residues. The GH16 domain occupies 70-328 (YDFTGNTPPP…WIHTYQLVEE (259 aa)). Residues W110, 119 to 129 (KAENSGVSDGK), 133 to 135 (KAT), E188, E193, and R224 contribute to the substrate site. E188 acts as the Nucleophile in catalysis. E193 acts as the Proton donor in catalysis.

Belongs to the glycosyl hydrolase 16 family.

Its subcellular location is the secreted. The catalysed reaction is Hydrolysis of (1-&gt;4)-beta-D-galactosidic linkages in agarose, giving the tetramer as the predominant product.. Cleaves the beta-1,4-linkages between beta-D-galactose and alpha-L-3,6-anhydro-galactose residues in agarose. Cleaves agarose in a random manner with retention of the anomeric-bond configuration, producing beta-anomers that give rise progressively to alpha-anomers when mutarotation takes place. The protein is Beta-agarase C (agaC) of Zobellia galactanivorans (strain DSM 12802 / CCUG 47099 / CIP 106680 / NCIMB 13871 / Dsij).